The chain runs to 383 residues: Probable disease resistance protein At4g19060 (383 aa).

Positions 36–84 are disordered; the sequence is YEKWSSGKQRGSSSKHGNQSTHGDSSPTRNSSGSSKKGRPKANRVETSS. Residues 41 to 70 show a composition bias toward polar residues; that stretch reads SGKQRGSSSKHGNQSTHGDSSPTRNSSGSS. NB-ARC domains lie at 75–184 and 207–281; these read PKAN…MFKH and VKEK…LAKA. Position 121–128 (121–128) interacts with ATP; sequence GKYGVGKT.

Functionally, possible disease resistance protein. The protein is Probable disease resistance protein At4g19060 of Arabidopsis thaliana (Mouse-ear cress).